Reading from the N-terminus, the 231-residue chain is Ribonuclease P protein component 3 (231 aa).

It belongs to the eukaryotic/archaeal RNase P protein component 3 family. In terms of assembly, consists of a catalytic RNA component and at least 4-5 protein subunits.

It localises to the cytoplasm. It carries out the reaction Endonucleolytic cleavage of RNA, removing 5'-extranucleotides from tRNA precursor.. Its function is as follows. Part of ribonuclease P, a protein complex that generates mature tRNA molecules by cleaving their 5'-ends. The chain is Ribonuclease P protein component 3 from Methanococcus maripaludis (strain C5 / ATCC BAA-1333).